Reading from the N-terminus, the 97-residue chain is MYSLLIEPILTEKSNMLRTEPRGTEKRYYVFKVRQDANKTELKKAVEKIFNVHPLDCKIINVKPKKKNRRMSRRGYTRSYKKAIIVLDGKESIDIVK.

The protein belongs to the universal ribosomal protein uL23 family. As to quaternary structure, part of the 50S ribosomal subunit. Contacts protein L29, and trigger factor when it is bound to the ribosome.

One of the early assembly proteins it binds 23S rRNA. One of the proteins that surrounds the polypeptide exit tunnel on the outside of the ribosome. Forms the main docking site for trigger factor binding to the ribosome. This chain is Large ribosomal subunit protein uL23, found in Brachyspira hyodysenteriae (strain ATCC 49526 / WA1).